The chain runs to 491 residues: Probable diguanylate cyclase CdgI (491 aa).

At 1-54 (MIQSTRISMGLFFKYFLSLTKIDPGQNYISLPSIKSSTHIALLFMVSMGTQKLK) the chain is on the cytoplasmic side. A helical transmembrane segment spans residues 55-75 (AQSFFIFSLLLTLILFCITTL). The Periplasmic portion of the chain corresponds to 76–89 (YNENTNVKLIPQMN). The chain crosses the membrane as a helical span at residues 90–110 (YLMVVVALFFLNAVIFLFMLM). The Cytoplasmic segment spans residues 111–121 (KYFTNKQILPT). A helical transmembrane segment spans residues 122–142 (LILSLAFLSGLIYLVETIVII). Residues 143–158 (HKPINGSTLIQTKSND) lie on the Periplasmic side of the membrane. A helical membrane pass occupies residues 159 to 179 (VSIFYIFRQLSFICLTSLALF). Residues 180–193 (CYGKDNILDNNKKK) are Cytoplasmic-facing. The helical transmembrane segment at 194 to 214 (TGILLLALIPFLVFPLLAHNL) threads the bilayer. Topologically, residues 215–236 (SSYNADYSLYVVDYCPDNHTAT) are periplasmic. A helical transmembrane segment spans residues 237 to 257 (WGINYTKILVCLWAFLLFFII). Topologically, residues 258-265 (MRTRLASE) are cytoplasmic. The chain crosses the membrane as a helical span at residues 266 to 286 (LWPLIALLCLASLCCNLLLLT). Topologically, residues 287–293 (LDEYNYT) are periplasmic. Residues 294–314 (IWYISRGIEVSSKLFVVSFLI) form a helical membrane-spanning segment. The Cytoplasmic portion of the chain corresponds to 315–491 (YNIFQELQLS…GGNKVIIHHI (177 aa)). A GGDEF domain is found at 356 to 491 (KDFCVMLVDI…GGNKVIIHHI (136 aa)). 2 residues coordinate Mg(2+): aspartate 364 and isoleucine 365. 3 residues coordinate substrate: asparagine 372, histidine 377, and aspartate 381. Glutamate 407 serves as a coordination point for Mg(2+). The Proton acceptor role is filled by glutamate 407. Arginine 427 provides a ligand contact to substrate.

In terms of assembly, homodimer. It depends on Mg(2+) as a cofactor.

The protein localises to the cell inner membrane. It carries out the reaction 2 GTP = 3',3'-c-di-GMP + 2 diphosphate. It functions in the pathway purine metabolism; 3',5'-cyclic di-GMP biosynthesis. Its function is as follows. Catalyzes the synthesis of cyclic-di-GMP (c-di-GMP) via the condensation of 2 GTP molecules. The sequence is that of Probable diguanylate cyclase CdgI from Escherichia coli (strain K12).